Consider the following 58-residue polypeptide: UPF0391 membrane protein Sden_3712 (58 aa).

The next 2 helical transmembrane spans lie at 6 to 26 (LTFL…IAGA) and 27 to 47 (AAGI…ISLV).

The protein belongs to the UPF0391 family.

It localises to the cell membrane. The polypeptide is UPF0391 membrane protein Sden_3712 (Shewanella denitrificans (strain OS217 / ATCC BAA-1090 / DSM 15013)).